The chain runs to 348 residues: Ketol-acid reductoisomerase (NADP(+)) (348 aa).

One can recognise a KARI N-terminal Rossmann domain in the interval 2–182 (AKTYYDHDAD…GCTRAGVLET (181 aa)). NADP(+) contacts are provided by residues 25–28 (YGSQ), Ser-51, Ser-53, and 83–86 (DTAQ). His-108 is a catalytic residue. Gly-134 lines the NADP(+) pocket. Positions 183–328 (TFKEETETDL…EKLRAAMPFL (146 aa)) constitute a KARI C-terminal knotted domain. Asp-191, Glu-195, Glu-227, and Glu-231 together coordinate Mg(2+). Ser-252 contributes to the substrate binding site.

This sequence belongs to the ketol-acid reductoisomerase family. Mg(2+) serves as cofactor.

It carries out the reaction (2R)-2,3-dihydroxy-3-methylbutanoate + NADP(+) = (2S)-2-acetolactate + NADPH + H(+). It catalyses the reaction (2R,3R)-2,3-dihydroxy-3-methylpentanoate + NADP(+) = (S)-2-ethyl-2-hydroxy-3-oxobutanoate + NADPH + H(+). It participates in amino-acid biosynthesis; L-isoleucine biosynthesis; L-isoleucine from 2-oxobutanoate: step 2/4. The protein operates within amino-acid biosynthesis; L-valine biosynthesis; L-valine from pyruvate: step 2/4. In terms of biological role, involved in the biosynthesis of branched-chain amino acids (BCAA). Catalyzes an alkyl-migration followed by a ketol-acid reduction of (S)-2-acetolactate (S2AL) to yield (R)-2,3-dihydroxy-isovalerate. In the isomerase reaction, S2AL is rearranged via a Mg-dependent methyl migration to produce 3-hydroxy-3-methyl-2-ketobutyrate (HMKB). In the reductase reaction, this 2-ketoacid undergoes a metal-dependent reduction by NADPH to yield (R)-2,3-dihydroxy-isovalerate. This chain is Ketol-acid reductoisomerase (NADP(+)), found in Acidobacterium capsulatum (strain ATCC 51196 / DSM 11244 / BCRC 80197 / JCM 7670 / NBRC 15755 / NCIMB 13165 / 161).